The chain runs to 93 residues: Small integral membrane protein 41 (93 aa).

Residues 38-58 (VVLGVLSLLVLCGVLFLGGGL) traverse the membrane as a helical segment. Positions 71-80 (REQRASREPE) are enriched in basic and acidic residues. The segment at 71 to 93 (REQRASREPEPGSASGEDGDDDS) is disordered.

Its subcellular location is the membrane. This chain is Small integral membrane protein 41, found in Homo sapiens (Human).